A 492-amino-acid polypeptide reads, in one-letter code: ATP synthase subunit beta, chloroplastic (492 aa).

Residue 170 to 177 (GGAGVGKT) coordinates ATP.

It belongs to the ATPase alpha/beta chains family. In terms of assembly, F-type ATPases have 2 components, CF(1) - the catalytic core - and CF(0) - the membrane proton channel. CF(1) has five subunits: alpha(3), beta(3), gamma(1), delta(1), epsilon(1). CF(0) has four main subunits: a(1), b(1), b'(1) and c(9-12).

It is found in the plastid. Its subcellular location is the chloroplast thylakoid membrane. It carries out the reaction ATP + H2O + 4 H(+)(in) = ADP + phosphate + 5 H(+)(out). Its function is as follows. Produces ATP from ADP in the presence of a proton gradient across the membrane. The catalytic sites are hosted primarily by the beta subunits. The protein is ATP synthase subunit beta, chloroplastic of Angiopteris lygodiifolia (Turnip fern).